The following is a 138-amino-acid chain: Probable phospholipase A2 homolog 1 (138 aa).

Positions 1 to 21 are cleaved as a signal peptide; it reads MPPRSPLLALVFLAAGVLSSA. Disulfide bonds link Cys-29/Cys-56, Cys-33/Cys-62, Cys-38/Cys-109, Cys-49/Cys-69, Cys-68/Cys-93, and Cys-75/Cys-86. Ca(2+)-binding residues include Tyr-48, Gly-50, and Trp-53. His-72 is a catalytic residue. Asp-73 lines the Ca(2+) pocket.

This sequence belongs to the phospholipase A2 family. Ca(2+) is required as a cofactor.

It is found in the secreted. The catalysed reaction is a 1,2-diacyl-sn-glycero-3-phosphocholine + H2O = a 1-acyl-sn-glycero-3-phosphocholine + a fatty acid + H(+). PA2 catalyzes the calcium-dependent hydrolysis of the 2-acyl groups in 3-sn-phosphoglycerides. Releases lysophospholipids (LPLs) and free fatty acids (FFAs) from membrane phospholipids in response to hormones and other external stimuli. This Oryza sativa subsp. japonica (Rice) protein is Probable phospholipase A2 homolog 1 (PLA2-I).